The sequence spans 122 residues: Serum amyloid A-2 protein (122 aa).

The first 18 residues, 1–18 (MKLLSGLLLCSLVLGVSG), serve as a signal peptide directing secretion. Gln-19 is subject to Pyrrolidone carboxylic acid. The interval 90–122 (GAEDSMADQAANEWGRSGKDPNHFRPKGLPDKY) is disordered. Over residues 105-122 (RSGKDPNHFRPKGLPDKY) the composition is skewed to basic and acidic residues.

The protein belongs to the SAA family. As to quaternary structure, apolipoprotein of the HDL complex. As to expression, expressed by the liver; secreted in plasma.

The protein localises to the secreted. Major acute phase reactant. This chain is Serum amyloid A-2 protein (SAA2), found in Oryctolagus cuniculus (Rabbit).